The sequence spans 63 residues: uncharacterized protein (63 aa).

It localises to the mitochondrion. This is an uncharacterized protein from Marchantia polymorpha (Common liverwort).